The primary structure comprises 338 residues: tRNA N6-adenosine threonylcarbamoyltransferase (338 aa).

Residues H110, H114, and Y131 each contribute to the Fe cation site. Substrate is bound by residues 131–135 (YVSGG), D163, D184, and N268. Residue D296 coordinates Fe cation.

The protein belongs to the KAE1 / TsaD family. Fe(2+) serves as cofactor.

It is found in the cytoplasm. It carries out the reaction L-threonylcarbamoyladenylate + adenosine(37) in tRNA = N(6)-L-threonylcarbamoyladenosine(37) in tRNA + AMP + H(+). Functionally, required for the formation of a threonylcarbamoyl group on adenosine at position 37 (t(6)A37) in tRNAs that read codons beginning with adenine. Is probably involved in the transfer of the threonylcarbamoyl moiety of threonylcarbamoyl-AMP (TC-AMP) to the N6 group of A37. This chain is tRNA N6-adenosine threonylcarbamoyltransferase, found in Staphylothermus marinus (strain ATCC 43588 / DSM 3639 / JCM 9404 / F1).